We begin with the raw amino-acid sequence, 276 residues long: Golgi apparatus membrane protein TVP23 homolog C (276 aa).

The residue at position 1 (Met1) is an N-acetylmethionine. A disordered region spans residues 1-21; that stretch reads MLQQDSNDDTEDVSLFDAEEE. The next 2 helical transmembrane spans lie at 52 to 72 and 126 to 146; these read LLCE…ILLL and IFWL…FSAL. Residues 254–276 form a disordered region; that stretch reads GESPNSRGTGEPGPKFHLASGMH.

This sequence belongs to the TVP23 family.

The protein resides in the membrane. The chain is Golgi apparatus membrane protein TVP23 homolog C (TVP23C) from Homo sapiens (Human).